The following is a 209-amino-acid chain: Uracil phosphoribosyltransferase (209 aa).

Residues Arg-79, Arg-104, and 131–139 (DPMLATGGS) contribute to the 5-phospho-alpha-D-ribose 1-diphosphate site. Residues Ile-194 and 199-201 (GDA) each bind uracil. Asp-200 contributes to the 5-phospho-alpha-D-ribose 1-diphosphate binding site.

This sequence belongs to the UPRTase family. As to quaternary structure, homodimer. It depends on Mg(2+) as a cofactor.

It carries out the reaction UMP + diphosphate = 5-phospho-alpha-D-ribose 1-diphosphate + uracil. Its pathway is pyrimidine metabolism; UMP biosynthesis via salvage pathway; UMP from uracil: step 1/1. Allosterically activated by GTP. Functionally, catalyzes the conversion of uracil and 5-phospho-alpha-D-ribose 1-diphosphate (PRPP) to UMP and diphosphate. In Bacillus caldolyticus, this protein is Uracil phosphoribosyltransferase.